The sequence spans 347 residues: Protein YIPF3 (347 aa).

Residues Met-1–Gly-28 are disordered. The residue at position 2 (Ala-2) is an N-acetylalanine. Topologically, residues Ala-2–Lys-145 are cytoplasmic. A helical membrane pass occupies residues Val-146–His-166. Residues Gly-167 to Ala-184 lie on the Lumenal side of the membrane. Residues Ile-185–Leu-205 form a helical membrane-spanning segment. The Cytoplasmic portion of the chain corresponds to Cys-206–Thr-211. A helical transmembrane segment spans residues Met-212–Tyr-234. The Lumenal segment spans residues Asn-235 to His-237. Residues Leu-238–Val-260 form a helical membrane-spanning segment. Residues Leu-261–Arg-271 are Cytoplasmic-facing. Residues Leu-272–Ala-292 traverse the membrane as a helical segment. At Tyr-293 to His-347 the chain is on the lumenal side. The N-linked (GlcNAc...) asparagine glycan is linked to Asn-334.

This sequence belongs to the YIP1 family. As to quaternary structure, interacts with YIPF4 and YIPF5.

The protein resides in the cell membrane. The protein localises to the golgi apparatus. It localises to the cis-Golgi network membrane. Its subcellular location is the cytoplasm. Functionally, involved in the maintenance of the Golgi structure. May play a role in hematopoiesis. This is Protein YIPF3 (Yipf3) from Rattus norvegicus (Rat).